A 298-amino-acid chain; its full sequence is Leucine-rich repeat-containing protein 55 (298 aa).

The signal sequence occupies residues 1-34; that stretch reads MGDTWAQLPWPGPPHSALLLVFFLLAAGVMHSDA. The 31-residue stretch at 35–65 folds into the LRRNT domain; the sequence is GASCPVLCTCRNQVVDCSNQRLFSVPPDLPM. Intrachain disulfides connect C38/C44 and C42/C51. LRR repeat units follow at residues 66–87, 90–111, 114–135, 138–160, and 163–186; these read DTRN…YLTC, ELRV…LFLH, RLAH…MFRE, GLVH…AFQG, and HLRD…EGLP. Residues 196–251 enclose the LRRCT domain; sequence NPWVCGCTMEPLLKWLRNRIQRCTADSQLAECRGPPEVEGAPLFSLTEESFKACHL. 2 disulfides stabilise this stretch: C200-C227 and C202-C249. The helical transmembrane segment at 259-279 threads the bilayer; the sequence is LFIAFVGFVVSIASVATNFLL.

Interacts with KCNMA1.

The protein resides in the cell membrane. In terms of biological role, auxiliary protein of the large-conductance, voltage and calcium-activated potassium channel (BK alpha). Modulates gating properties by producing a marked shift in the BK channel's voltage dependence of activation in the hyperpolarizing direction, and in the absence of calcium. The polypeptide is Leucine-rich repeat-containing protein 55 (Lrrc55) (Rattus norvegicus (Rat)).